The following is a 632-amino-acid chain: Transcription factor tazR (632 aa).

The zn(2)-C6 fungal-type DNA-binding region spans 20–47 (CNECRARKLRCDRVRPTCGTCESLGVTC). Residues 77 to 130 (WNGQQKAAGGSPGESPPCSEGGQTLRAVSESTSDGVHDEDHANGARPPSSQSSI) form a disordered region.

The protein resides in the nucleus. Functionally, transcription factor that regulates the expression of the gene cluster that mediates the biosynthesis of azaterrilone A and other azaphilones, a class of fungal metabolites characterized by a highly oxygenated pyrano-quinone bicyclic core and exhibiting a broad range of bioactivities. This is Transcription factor tazR from Aspergillus terreus (strain NIH 2624 / FGSC A1156).